An 897-amino-acid chain; its full sequence is Protein SAP1 (897 aa).

5 disordered regions span residues 112-144 (EEPA…PVFQ), 195-219 (PSKP…PPLK), 302-398 (QMSD…TKST), 413-438 (SKSN…PNSV), and 456-561 (KKVA…REEP). The segment covering 120-137 (MPSSKTYTNHSSSFTRST) has biased composition (polar residues). Over residues 209–219 (NPIEHNDPPLK) the composition is skewed to basic and acidic residues. Positions 307–321 (SVTSSTSSNKSVSSS) are enriched in low complexity. The segment covering 364-380 (LETSTTMDSSKIRNPQI) has biased composition (polar residues). Residues 468 to 478 (KKSHPILKSKT) show a composition bias toward basic residues. Residues 480-496 (KVPNSSSKKTSSHPSRP) show a composition bias toward low complexity. Residues 497-523 (VSNSKPYSHGASQNKKPSKNQTTSMSK) show a composition bias toward polar residues. S536 bears the Phosphoserine mark. ATP is bound at residue 645 to 652 (GPPGTGKT).

This sequence belongs to the AAA ATPase family. Interacts with SPT2/SIN1.

The protein is Protein SAP1 (SAP1) of Saccharomyces cerevisiae (strain ATCC 204508 / S288c) (Baker's yeast).